The chain runs to 245 residues: Orotidine 5'-phosphate decarboxylase (245 aa).

Substrate-binding positions include Asp22, Lys44, 71–80 (DLKFHDIPNT), Thr131, Arg192, Gln201, Gly221, and Arg222. The active-site Proton donor is the Lys73.

It belongs to the OMP decarboxylase family. Type 1 subfamily. Homodimer.

The catalysed reaction is orotidine 5'-phosphate + H(+) = UMP + CO2. Its pathway is pyrimidine metabolism; UMP biosynthesis via de novo pathway; UMP from orotate: step 2/2. Catalyzes the decarboxylation of orotidine 5'-monophosphate (OMP) to uridine 5'-monophosphate (UMP). This chain is Orotidine 5'-phosphate decarboxylase, found in Yersinia pseudotuberculosis serotype O:1b (strain IP 31758).